The primary structure comprises 1116 residues: Anillin (1116 aa).

Basic and acidic residues-rich tracts occupy residues Met1–Asp25 and Lys85–Lys94. Disordered regions lie at residues Met1–Arg188, Asp205–Thr257, Lys304–Thr363, and Asn443–Val522. Polar residues predominate over residues Ala101–Ser119. Over residues Ser120 to Ser133 the composition is skewed to basic and acidic residues. Positions Leu142–Pro254 are interactions with myh9 and myh10. The segment covering Ser226–Ser242 has biased composition (low complexity). The interval Lys255–Ala418 is interaction with F-actin. 2 stretches are compositionally biased toward polar residues: residues Lys304 to Gln326 and Tyr336 to Gln356. Residues Ser416–Asn443 are a coiled coil. The segment covering Gln453–Ser472 has biased composition (polar residues). The PH domain occupies Ser975–Val1099.

Interacts with and bundles F-actin. Interacts with the non-muscle myosin II heavy chains myh9 and myh10, and these interactions may be enhanced by the phosphorylation of myosin II regulatory light chain by mylk.

Its subcellular location is the nucleus. The protein localises to the cytoplasm. The protein resides in the cytoskeleton. It localises to the cell cortex. It is found in the cell projection. Its subcellular location is the bleb. Required for cytokinesis. Essential for the structural integrity of the cleavage furrow and for completion of cleavage furrow ingression. Plays a role in bleb assembly during metaphase and anaphase of mitosis. May play a significant role in podocyte cell migration. This chain is Anillin (anln), found in Xenopus laevis (African clawed frog).